The chain runs to 291 residues: Formamidopyrimidine-DNA glycosylase (291 aa).

Pro2 acts as the Schiff-base intermediate with DNA in catalysis. Glu3 (proton donor) is an active-site residue. The Proton donor; for beta-elimination activity role is filled by Lys58. 3 residues coordinate DNA: His104, Arg123, and Lys166. The segment at 257–291 (KVYDREGEPCPTCGGTVQRFVQNGRSTFWCPKCQK) adopts an FPG-type zinc-finger fold. Arg281 acts as the Proton donor; for delta-elimination activity in catalysis.

It belongs to the FPG family. As to quaternary structure, monomer. It depends on Zn(2+) as a cofactor.

The catalysed reaction is Hydrolysis of DNA containing ring-opened 7-methylguanine residues, releasing 2,6-diamino-4-hydroxy-5-(N-methyl)formamidopyrimidine.. The enzyme catalyses 2'-deoxyribonucleotide-(2'-deoxyribose 5'-phosphate)-2'-deoxyribonucleotide-DNA = a 3'-end 2'-deoxyribonucleotide-(2,3-dehydro-2,3-deoxyribose 5'-phosphate)-DNA + a 5'-end 5'-phospho-2'-deoxyribonucleoside-DNA + H(+). Its function is as follows. Involved in base excision repair of DNA damaged by oxidation or by mutagenic agents. Acts as a DNA glycosylase that recognizes and removes damaged bases. Has a preference for oxidized purines, such as 7,8-dihydro-8-oxoguanine (8-oxoG). Has AP (apurinic/apyrimidinic) lyase activity and introduces nicks in the DNA strand. Cleaves the DNA backbone by beta-delta elimination to generate a single-strand break at the site of the removed base with both 3'- and 5'-phosphates. The sequence is that of Formamidopyrimidine-DNA glycosylase from Rhodopseudomonas palustris (strain ATCC BAA-98 / CGA009).